We begin with the raw amino-acid sequence, 403 residues long: Solanesyl-diphosphate synthase 2, chloroplastic (403 aa).

The N-terminal 62 residues, 1 to 62, are a transit peptide targeting the chloroplast; the sequence is MLSVSCPRVY…QPGLAAVDVP (62 aa). Lys-123, Arg-126, and His-161 together coordinate isopentenyl diphosphate. Mg(2+) is bound by residues Asp-168 and Asp-172. Arg-177 contacts an all-trans-polyprenyl diphosphate. Arg-178 is a binding site for isopentenyl diphosphate. 4 residues coordinate an all-trans-polyprenyl diphosphate: Lys-254, Thr-255, Gln-292, and Lys-309.

Belongs to the FPP/GGPP synthase family. Homodimer. Interacts with FBN5. Mg(2+) is required as a cofactor. In terms of tissue distribution, expressed in leaves, stems and roots. Highest expression in leaves and roots.

Its subcellular location is the plastid. The protein localises to the chloroplast. It carries out the reaction 7 isopentenyl diphosphate + (2E)-geranyl diphosphate = all-trans-nonaprenyl diphosphate + 7 diphosphate. In terms of biological role, involved in providing solanesyl diphosphate for plastoquinone-9 (PQ-9) formation. Geranyl diphosphate is the preferred substrate. In Oryza sativa subsp. japonica (Rice), this protein is Solanesyl-diphosphate synthase 2, chloroplastic.